A 219-amino-acid polypeptide reads, in one-letter code: Ribose-5-phosphate isomerase A (219 aa).

Substrate is bound by residues 28–31 (TGST), 81–84 (DGAD), and 94–97 (KGGG). Catalysis depends on E103, which acts as the Proton acceptor. K121 contributes to the substrate binding site.

Belongs to the ribose 5-phosphate isomerase family. Homodimer.

It catalyses the reaction aldehydo-D-ribose 5-phosphate = D-ribulose 5-phosphate. It functions in the pathway carbohydrate degradation; pentose phosphate pathway; D-ribose 5-phosphate from D-ribulose 5-phosphate (non-oxidative stage): step 1/1. Functionally, catalyzes the reversible conversion of ribose-5-phosphate to ribulose 5-phosphate. The polypeptide is Ribose-5-phosphate isomerase A (Salmonella arizonae (strain ATCC BAA-731 / CDC346-86 / RSK2980)).